The primary structure comprises 149 residues: Basic phospholipase A2 homolog MitTx-beta (149 aa).

Positions 1 to 30 (MDKMNPAHLLVLAAVCVSLLGASSIPPQAL) are cleaved as a signal peptide. 7 cysteine pairs are disulfide-bonded: Cys41–Cys100, Cys55–Cys148, Cys57–Cys73, Cys72–Cys130, Cys79–Cys123, Cys89–Cys116, and Cys109–Cys121.

This sequence belongs to the phospholipase A2 family. Group I subfamily. K49 sub-subfamily. As to quaternary structure, heterodimer of an alpha (Kunitz-type) and a beta (phospholipase A2 homolog) chains; non-covalently-linked. As to expression, expressed by the venom gland.

The protein localises to the secreted. In terms of biological role, heterodimer: MitTx, a heteromeric complex between Kunitz- and phospholipase-A2-like proteins, potently, persistently and selectively activates rat and chicken acid-sensing ion channel ASIC1. Both alternatively spliced rat isoforms ASIC1a and ASIC1b are activated, with a higher potency for ASIC1a (EC(50)=9.4 nM) vs ASIC1b (EC(50)=23 nM). The rat ASIC3 subtype is also sensitive to the heterodimer, but with a lower potency (EC(50)=830 nM). On rat ASIC2a, the toxin shows a very weak activation, but produces a remarkable potentiation (&gt;100-fold) of protons when the extracellular pH drops below neutrality. Moderate and weak activations are also observed on the heterotrimers Asic1a-Asic2a and Asic1a-Asic3 (expressed in CHO cells), respectively. The binding sites of the beta subunit of MitTx and the spider psalmotoxin-1 toxin overlap, explaining why these toxins are mutually exclusive. In vivo, the heterodimer elicits robust pain-related behavior in mice by activation of ASIC1 channels on capsaicin-sensitive nerve fibers. Monomer: does not have phospholipase A2 activity but may maintain some lipid-binding character from its PLA2 lineage, which could aid in effecting neuronal depolarization. In Micrurus tener tener (Texas coral snake), this protein is Basic phospholipase A2 homolog MitTx-beta.